The sequence spans 225 residues: Glycerol-3-phosphate acyltransferase (225 aa).

Helical transmembrane passes span 6-26, 55-75, 95-115, 135-155, 160-180, and 187-207; these read FFFF…LIIG, WGIV…IICL, DIAI…SIFN, PFIG…VGYA, IMAT…PGIT, and ILYF…HSNI.

It belongs to the PlsY family. In terms of assembly, probably interacts with PlsX.

The protein resides in the cell membrane. It catalyses the reaction an acyl phosphate + sn-glycerol 3-phosphate = a 1-acyl-sn-glycero-3-phosphate + phosphate. The protein operates within lipid metabolism; phospholipid metabolism. Its function is as follows. Catalyzes the transfer of an acyl group from acyl-phosphate (acyl-PO(4)) to glycerol-3-phosphate (G3P) to form lysophosphatidic acid (LPA). This enzyme utilizes acyl-phosphate as fatty acyl donor, but not acyl-CoA or acyl-ACP. The chain is Glycerol-3-phosphate acyltransferase from Phytoplasma australiense.